A 186-amino-acid chain; its full sequence is Peptidyl-tRNA hydrolase (186 aa).

Y14 lines the tRNA pocket. The active-site Proton acceptor is H19. Residues Y61, N63, and N107 each contribute to the tRNA site.

The protein belongs to the PTH family. In terms of assembly, monomer.

The protein localises to the cytoplasm. It carries out the reaction an N-acyl-L-alpha-aminoacyl-tRNA + H2O = an N-acyl-L-amino acid + a tRNA + H(+). Functionally, hydrolyzes ribosome-free peptidyl-tRNAs (with 1 or more amino acids incorporated), which drop off the ribosome during protein synthesis, or as a result of ribosome stalling. Catalyzes the release of premature peptidyl moieties from peptidyl-tRNA molecules trapped in stalled 50S ribosomal subunits, and thus maintains levels of free tRNAs and 50S ribosomes. This Helicobacter acinonychis (strain Sheeba) protein is Peptidyl-tRNA hydrolase.